The primary structure comprises 115 residues: Large ribosomal subunit protein bL19 (115 aa).

It belongs to the bacterial ribosomal protein bL19 family.

In terms of biological role, this protein is located at the 30S-50S ribosomal subunit interface and may play a role in the structure and function of the aminoacyl-tRNA binding site. The chain is Large ribosomal subunit protein bL19 from Klebsiella pneumoniae (strain 342).